The chain runs to 341 residues: Probable cytosolic iron-sulfur protein assembly protein Ciao1 (341 aa).

7 WD repeats span residues 12-51, 58-97, 102-141, 151-190, 197-236, 255-294, and 305-341; these read GHAG…RWVA, GHTR…FECN, GHDN…DQED, GHTQ…SEWE, SHSS…NALG, YHSR…DRNE, and AHSQ…VDAD.

The protein belongs to the WD repeat CIA1 family.

Functionally, essential component of the cytosolic iron-sulfur (Fe/S) protein assembly machinery. Required for the maturation of extramitochondrial Fe/S proteins. The protein is Probable cytosolic iron-sulfur protein assembly protein Ciao1 of Anopheles gambiae (African malaria mosquito).